We begin with the raw amino-acid sequence, 346 residues long: N-acetyl-gamma-glutamyl-phosphate reductase (346 aa).

Residue Cys149 is part of the active site.

Belongs to the NAGSA dehydrogenase family. Type 1 subfamily.

The protein resides in the cytoplasm. It carries out the reaction N-acetyl-L-glutamate 5-semialdehyde + phosphate + NADP(+) = N-acetyl-L-glutamyl 5-phosphate + NADPH + H(+). It functions in the pathway amino-acid biosynthesis; L-arginine biosynthesis; N(2)-acetyl-L-ornithine from L-glutamate: step 3/4. In terms of biological role, catalyzes the NADPH-dependent reduction of N-acetyl-5-glutamyl phosphate to yield N-acetyl-L-glutamate 5-semialdehyde. This Geobacter sulfurreducens (strain ATCC 51573 / DSM 12127 / PCA) protein is N-acetyl-gamma-glutamyl-phosphate reductase.